The sequence spans 240 residues: Tetrahydromethanopterin S-methyltransferase subunit A (240 aa).

Residues 1-218 (MVDKKEPASG…KFHSGVHAGK (218 aa)) lie on the Cytoplasmic side of the membrane. 5-hydroxybenzimidazolylcob(I)amide is bound at residue His85. A helical transmembrane segment spans residues 219 to 239 (IEGAMIGLTVTISLLGLLLLG). A topological domain (extracellular) is located at residue Arg240.

The protein belongs to the MtrA family. In terms of assembly, the complex is composed of 8 subunits; MtrA, MtrB, MtrC, MtrD, MtrE, MtrF, MtrG and MtrH. 5-hydroxybenzimidazolylcob(I)amide serves as cofactor.

The protein localises to the cell membrane. The catalysed reaction is 5-methyl-5,6,7,8-tetrahydromethanopterin + coenzyme M + 2 Na(+)(in) = 5,6,7,8-tetrahydromethanopterin + methyl-coenzyme M + 2 Na(+)(out). Its pathway is one-carbon metabolism; methanogenesis from CO(2); methyl-coenzyme M from 5,10-methylene-5,6,7,8-tetrahydromethanopterin: step 2/2. In terms of biological role, part of a complex that catalyzes the formation of methyl-coenzyme M and tetrahydromethanopterin from coenzyme M and methyl-tetrahydromethanopterin. This is an energy-conserving, sodium-ion translocating step. This Methanosarcina acetivorans (strain ATCC 35395 / DSM 2834 / JCM 12185 / C2A) protein is Tetrahydromethanopterin S-methyltransferase subunit A.